The chain runs to 1818 residues: U3 small nucleolar RNA-associated protein 10 (1818 aa).

Residues 568–588 traverse the membrane as a helical segment; that stretch reads TDFYLLIPLILLALFDNSKLI. One copy of the HEAT repeat lies at 1778 to 1816; the sequence is LVPYIAELLEDDDEEVEMEVRRGLVRVIENVLGEPLDRY.

This sequence belongs to the HEATR1/UTP10 family. Component of the ribosomal small subunit (SSU) processome.

It is found in the nucleus. The protein resides in the nucleolus. The protein localises to the membrane. Functionally, involved in nucleolar processing of pre-18S ribosomal RNA. Involved in ribosome biosynthesis. This is U3 small nucleolar RNA-associated protein 10 from Candida albicans (strain SC5314 / ATCC MYA-2876) (Yeast).